Reading from the N-terminus, the 674-residue chain is Probable copper-transporting P-type ATPase B (674 aa).

The tract at residues 1-22 is disordered; sequence MNHSNQMHHDNHESHNHHSGHA. Residues 7-16 are compositionally biased toward basic and acidic residues; that stretch reads MHHDNHESHN. Helical transmembrane passes span 32–52, 57–77, 95–115, 127–147, 284–304, and 315–335; these read FFVS…MGIN, FTFP…FFYG, GMMT…LYAF, TMDF…GHWI, GYLF…WMLI, and LVTV…PLVT. Aspartate 367 functions as the 4-aspartylphosphate intermediate in the catalytic mechanism. Residues aspartate 565 and aspartate 569 each contribute to the Mg(2+) site. The next 2 membrane-spanning stretches (helical) occupy residues 623-645 and 649-671; these read LWWG…AFVG and SPAV…AFTL.

Belongs to the cation transport ATPase (P-type) (TC 3.A.3) family. Type IB subfamily.

The protein resides in the cell membrane. It carries out the reaction Cu(+)(in) + ATP + H2O = Cu(+)(out) + ADP + phosphate + H(+). In terms of biological role, involved in copper transport. This is Probable copper-transporting P-type ATPase B (copB) from Staphylococcus epidermidis (strain ATCC 12228 / FDA PCI 1200).